The primary structure comprises 132 residues: Fatty acid-binding protein, brain (132 aa).

Residue valine 2 is modified to N-acetylvaline. Residue 127-129 (RHY) coordinates a fatty acid.

The protein belongs to the calycin superfamily. Fatty-acid binding protein (FABP) family.

It localises to the cytoplasm. Its function is as follows. FABPs are thought to play a role in the intracellular transport of long-chain fatty acids and their acyl-CoA esters. The sequence is that of Fatty acid-binding protein, brain (FABP7) from Gallus gallus (Chicken).